The sequence spans 265 residues: Energy-coupling factor transporter transmembrane protein EcfT (265 aa).

Transmembrane regions (helical) follow at residues Val29–Phe49, Phe63–Leu83, Leu94–Phe114, Phe117–Thr137, Ile143–Ile163, and Arg243–Leu263.

It belongs to the energy-coupling factor EcfT family. As to quaternary structure, forms a stable energy-coupling factor (ECF) transporter complex composed of 2 membrane-embedded substrate-binding proteins (S component), 2 ATP-binding proteins (A component) and 2 transmembrane proteins (T component). May be able to interact with more than 1 S component at a time.

The protein resides in the cell membrane. In terms of biological role, transmembrane (T) component of an energy-coupling factor (ECF) ABC-transporter complex. Unlike classic ABC transporters this ECF transporter provides the energy necessary to transport a number of different substrates. The protein is Energy-coupling factor transporter transmembrane protein EcfT of Listeria innocua serovar 6a (strain ATCC BAA-680 / CLIP 11262).